Here is a 342-residue protein sequence, read N- to C-terminus: Glycerol-3-phosphate dehydrogenase [NAD(P)+] (342 aa).

NADPH contacts are provided by tryptophan 11, arginine 33, and lysine 112. Positions 112, 147, and 149 each coordinate sn-glycerol 3-phosphate. Alanine 151 contributes to the NADPH binding site. Residues lysine 202, aspartate 255, serine 265, arginine 266, and asparagine 267 each contribute to the sn-glycerol 3-phosphate site. The active-site Proton acceptor is the lysine 202. Arginine 266 contributes to the NADPH binding site. The NADPH site is built by valine 290 and glutamate 292.

It belongs to the NAD-dependent glycerol-3-phosphate dehydrogenase family.

It localises to the cytoplasm. The catalysed reaction is sn-glycerol 3-phosphate + NAD(+) = dihydroxyacetone phosphate + NADH + H(+). The enzyme catalyses sn-glycerol 3-phosphate + NADP(+) = dihydroxyacetone phosphate + NADPH + H(+). Its pathway is membrane lipid metabolism; glycerophospholipid metabolism. In terms of biological role, catalyzes the reduction of the glycolytic intermediate dihydroxyacetone phosphate (DHAP) to sn-glycerol 3-phosphate (G3P), the key precursor for phospholipid synthesis. The chain is Glycerol-3-phosphate dehydrogenase [NAD(P)+] from Cupriavidus metallidurans (strain ATCC 43123 / DSM 2839 / NBRC 102507 / CH34) (Ralstonia metallidurans).